Consider the following 374-residue polypeptide: Chaperone protein DnaJ (374 aa).

The 66-residue stretch at 5 to 70 (DYYEVLGVAK…QKRAAYDRYG (66 aa)) folds into the J domain. The CR-type zinc finger occupies 134–212 (GFDTEIRVPS…CDGVGRIRRN (79 aa)). Zn(2+) contacts are provided by Cys147, Cys150, Cys164, Cys167, Cys186, Cys189, Cys200, and Cys203. 4 CXXCXGXG motif repeats span residues 147 to 154 (CDTCHGSG), 164 to 171 (CRTCGGSG), 186 to 193 (CPTCHGTG), and 200 to 207 (CPSCDGVG).

The protein belongs to the DnaJ family. As to quaternary structure, homodimer. Zn(2+) serves as cofactor.

The protein localises to the cytoplasm. Its function is as follows. Participates actively in the response to hyperosmotic and heat shock by preventing the aggregation of stress-denatured proteins and by disaggregating proteins, also in an autonomous, DnaK-independent fashion. Unfolded proteins bind initially to DnaJ; upon interaction with the DnaJ-bound protein, DnaK hydrolyzes its bound ATP, resulting in the formation of a stable complex. GrpE releases ADP from DnaK; ATP binding to DnaK triggers the release of the substrate protein, thus completing the reaction cycle. Several rounds of ATP-dependent interactions between DnaJ, DnaK and GrpE are required for fully efficient folding. Also involved, together with DnaK and GrpE, in the DNA replication of plasmids through activation of initiation proteins. In Bordetella petrii (strain ATCC BAA-461 / DSM 12804 / CCUG 43448), this protein is Chaperone protein DnaJ.